The following is a 297-amino-acid chain: Ezy-1 protein (297 aa).

Disordered stretches follow at residues 1 to 34 (MAAV…GDGG), 115 to 151 (FTGK…SSSS), and 255 to 297 (QPAG…SPNM). Acidic residues predominate over residues 123 to 135 (AEGDDGEDEEEGE). Over residues 136–150 (AQGVGKDAVDSSSSS) the composition is skewed to low complexity. Over residues 259-269 (DGHEPEPKRPE) the composition is skewed to basic and acidic residues.

The chain is Ezy-1 protein (Ezy-1) from Chlamydomonas reinhardtii (Chlamydomonas smithii).